A 517-amino-acid chain; its full sequence is Crotonobetaine/carnitine--CoA ligase (517 aa).

This sequence belongs to the ATP-dependent AMP-binding enzyme family.

It carries out the reaction 4-(trimethylamino)butanoate + ATP + CoA = 4-(trimethylamino)butanoyl-CoA + AMP + diphosphate. The catalysed reaction is crotonobetaine + ATP + CoA = crotonobetainyl-CoA + AMP + diphosphate. It catalyses the reaction (R)-carnitine + ATP + CoA = (R)-carnitinyl-CoA + AMP + diphosphate. Its pathway is amine and polyamine metabolism; carnitine metabolism. In terms of biological role, catalyzes the transfer of CoA to carnitine, generating the initial carnitinyl-CoA needed for the CaiB reaction cycle. Also has activity toward crotonobetaine and gamma-butyrobetaine. In Escherichia coli O8 (strain IAI1), this protein is Crotonobetaine/carnitine--CoA ligase.